The primary structure comprises 749 residues: Triacylglycerol lipase 5 (749 aa).

Residues 54-59 (HAISYD) carry the HXXXXD acyltransferase motif motif. Residues 183 to 388 (LVLSGGSTFG…DNDMPISRLS (206 aa)) enclose the PNPLA domain. The GXSXG motif lies at 214–218 (GSSAG). Serine 216 serves as the catalytic Nucleophile. Asparagine 270, asparagine 289, asparagine 297, asparagine 304, and asparagine 321 each carry an N-linked (GlcNAc...) asparagine glycan. The active-site Proton acceptor is the aspartate 375. N-linked (GlcNAc...) asparagine glycans are attached at residues asparagine 474 and asparagine 589. The segment at 585–643 (IKSPNKTAAPGRFPLQPLPSPSSTFNKRKMDMLSPSPSPSTSPQRSKSSFTQQGTRQKA) is disordered. The segment covering 623–633 (PSTSPQRSKSS) has biased composition (low complexity). Positions 634–643 (FTQQGTRQKA) are enriched in polar residues. Phosphoserine is present on serine 645. Residues asparagine 680, asparagine 714, and asparagine 742 are each glycosylated (N-linked (GlcNAc...) asparagine).

Its subcellular location is the lipid droplet. The catalysed reaction is a triacylglycerol + H2O = a diacylglycerol + a fatty acid + H(+). The enzyme catalyses 1-(9Z-octadecenoyl)-sn-glycero-3-phosphate + (9Z)-octadecenoyl-CoA = 1,2-di-(9Z-octadecenoyl)-sn-glycero-3-phosphate + CoA. It catalyses the reaction 1-(9Z-octadecenoyl)-sn-glycero-3-phosphate + hexadecanoyl-CoA = 1-hexadecanoyl-2-(9Z-octadecenoyl)-sn-glycero-3-phosphate + CoA. Loses its lipolytic activity in cells lacking nonpolar lipids, but retains its side activity as lysophospholipid acyltransferase. Its function is as follows. Lipid particle-localized triacylglycerol (TAG) lipase. The lipid droplet/particle is a lipid storage compartment which serves as a depot of energy and building blocks for membrane lipid biosynthesis. Involved in the mobilization of the non-polar storage lipids triacylglycerols (TAGs) from lipid particles by hydrolysis of TAGs, releasing and supplying specific fatty acids to the appropriate metabolic pathways. Also catalyzes the acylation of lysophosphatidic acid (LPA). The polypeptide is Triacylglycerol lipase 5 (TGL5) (Saccharomyces cerevisiae (strain ATCC 204508 / S288c) (Baker's yeast)).